The chain runs to 400 residues: MTTLGTPLSPSATRVLLLGSGELGKEVAIELQRFGVEVIAADRYANAPAMQVAHRSHVLDMLDPAALRVLIASERPHVIVPEIEAIHTETLVALEREQGQKVIPAARAARLTMDREGIRRLAAETLGLPTSPYRFVDTAADYREAIAAVGLPCVVKPVMSSSGKGQSTLRSEADIDAAWEYAQTGGRAGAGRCIVEGFIDFDYEITLLTVRHAGGTSYCDPIGHWQQDGDYRESWQPQPMSAAALRRSQEIAKAITDDLGGWGLFGVELFVKGDEVWFSEVSPRPHDTGLVTLVSQELSEFALHARAILGLPVGAEDGGVIGQSGPSASCALLAHGNGVPVFDNVADALRDPNTALRLFGKPRVDGHRRVGVTLARADSIDAAREKARVAAAALGIQLTA.

N(1)-(5-phospho-beta-D-ribosyl)glycinamide is bound by residues 22 to 23 (EL) and Glu82. Residues Arg115, Lys156, 161-166 (SSGKGQ), 196-199 (EGFI), and Glu204 contribute to the ATP site. An ATP-grasp domain is found at 120–309 (RLAAETLGLP…EFALHARAIL (190 aa)). 2 residues coordinate Mg(2+): Glu268 and Glu280. N(1)-(5-phospho-beta-D-ribosyl)glycinamide is bound by residues Asp287, Lys361, and 368–369 (RR).

Belongs to the PurK/PurT family. As to quaternary structure, homodimer.

The catalysed reaction is N(1)-(5-phospho-beta-D-ribosyl)glycinamide + formate + ATP = N(2)-formyl-N(1)-(5-phospho-beta-D-ribosyl)glycinamide + ADP + phosphate + H(+). It participates in purine metabolism; IMP biosynthesis via de novo pathway; N(2)-formyl-N(1)-(5-phospho-D-ribosyl)glycinamide from N(1)-(5-phospho-D-ribosyl)glycinamide (formate route): step 1/1. Involved in the de novo purine biosynthesis. Catalyzes the transfer of formate to 5-phospho-ribosyl-glycinamide (GAR), producing 5-phospho-ribosyl-N-formylglycinamide (FGAR). Formate is provided by PurU via hydrolysis of 10-formyl-tetrahydrofolate. The sequence is that of Formate-dependent phosphoribosylglycinamide formyltransferase from Xanthomonas oryzae pv. oryzae (strain KACC10331 / KXO85).